We begin with the raw amino-acid sequence, 425 residues long: Serine--tRNA ligase (425 aa).

231–233 provides a ligand contact to L-serine; it reads TAE. 262–264 provides a ligand contact to ATP; that stretch reads RSE. E285 serves as a coordination point for L-serine. 349-352 contributes to the ATP binding site; sequence EISS. L-serine is bound at residue S385.

The protein belongs to the class-II aminoacyl-tRNA synthetase family. Type-1 seryl-tRNA synthetase subfamily. Homodimer. The tRNA molecule binds across the dimer.

The protein resides in the cytoplasm. The catalysed reaction is tRNA(Ser) + L-serine + ATP = L-seryl-tRNA(Ser) + AMP + diphosphate + H(+). The enzyme catalyses tRNA(Sec) + L-serine + ATP = L-seryl-tRNA(Sec) + AMP + diphosphate + H(+). The protein operates within aminoacyl-tRNA biosynthesis; selenocysteinyl-tRNA(Sec) biosynthesis; L-seryl-tRNA(Sec) from L-serine and tRNA(Sec): step 1/1. Catalyzes the attachment of serine to tRNA(Ser). Is also able to aminoacylate tRNA(Sec) with serine, to form the misacylated tRNA L-seryl-tRNA(Sec), which will be further converted into selenocysteinyl-tRNA(Sec). This Bartonella tribocorum (strain CIP 105476 / IBS 506) protein is Serine--tRNA ligase.